A 466-amino-acid polypeptide reads, in one-letter code: 55 kDa erythrocyte membrane protein (466 aa).

At Thr-2 the chain carries N-acetylthreonine. At Ser-19 the chain carries Phosphoserine. Thr-49 is subject to Phosphothreonine. A phosphoserine mark is found at Ser-57 and Ser-110. A PDZ domain is found at 71-152; sequence LIQFEKVTEE…MISLKVIPNQ (82 aa). One can recognise an SH3 domain in the interval 158–228; sequence ALQMFMRAQF…PSPELQEWRV (71 aa). Ser-243 bears the Phosphoserine mark. An interaction with PALS1 region spans residues 268–466; sequence VVSYEEVVRL…PQWVPVSWVY (199 aa). One can recognise a Guanylate kinase-like domain in the interval 282-451; sequence RKTLVLIGAS…TLKTLQETFD (170 aa).

It belongs to the MAGUK family. Heterodimer with PALS1. Interacts with DLG5 and NF2. Interacts (via guanylate kinase-like domain) with WHRN (via third PDZ domain). Interacts with PALS1. In terms of processing, palmitoylated.

The protein resides in the cell membrane. It is found in the cell projection. The protein localises to the stereocilium. Functionally, essential regulator of neutrophil polarity. Regulates neutrophil polarization by regulating AKT1 phosphorylation through a mechanism that is independent of PIK3CG activity. This Bos taurus (Bovine) protein is 55 kDa erythrocyte membrane protein (MPP1).